The following is a 180-amino-acid chain: 4-hydroxy-3-methylbut-2-enyl diphosphate reductase (180 aa).

[4Fe-4S] cluster is bound at residue Cys12. Residues His41 and His74 each coordinate (2E)-4-hydroxy-3-methylbut-2-enyl diphosphate. Residues His41 and His74 each coordinate dimethylallyl diphosphate. Positions 41 and 74 each coordinate isopentenyl diphosphate. Cys96 provides a ligand contact to [4Fe-4S] cluster. His124 contacts (2E)-4-hydroxy-3-methylbut-2-enyl diphosphate. His124 provides a ligand contact to dimethylallyl diphosphate. Residue His124 coordinates isopentenyl diphosphate. Glu126 acts as the Proton donor in catalysis. Thr168 contacts (2E)-4-hydroxy-3-methylbut-2-enyl diphosphate.

Belongs to the IspH family. The cofactor is [4Fe-4S] cluster.

It catalyses the reaction isopentenyl diphosphate + 2 oxidized [2Fe-2S]-[ferredoxin] + H2O = (2E)-4-hydroxy-3-methylbut-2-enyl diphosphate + 2 reduced [2Fe-2S]-[ferredoxin] + 2 H(+). The enzyme catalyses dimethylallyl diphosphate + 2 oxidized [2Fe-2S]-[ferredoxin] + H2O = (2E)-4-hydroxy-3-methylbut-2-enyl diphosphate + 2 reduced [2Fe-2S]-[ferredoxin] + 2 H(+). Its pathway is isoprenoid biosynthesis; dimethylallyl diphosphate biosynthesis; dimethylallyl diphosphate from (2E)-4-hydroxy-3-methylbutenyl diphosphate: step 1/1. It participates in isoprenoid biosynthesis; isopentenyl diphosphate biosynthesis via DXP pathway; isopentenyl diphosphate from 1-deoxy-D-xylulose 5-phosphate: step 6/6. Functionally, catalyzes the conversion of 1-hydroxy-2-methyl-2-(E)-butenyl 4-diphosphate (HMBPP) into a mixture of isopentenyl diphosphate (IPP) and dimethylallyl diphosphate (DMAPP). Acts in the terminal step of the DOXP/MEP pathway for isoprenoid precursor biosynthesis. The polypeptide is 4-hydroxy-3-methylbut-2-enyl diphosphate reductase (Pseudomonas fluorescens).